Here is a 569-residue protein sequence, read N- to C-terminus: Protein THEMIS3 (569 aa).

CABIT stretches follow at residues Met-1 to Asp-254 and Arg-255 to Ser-523.

It belongs to the themis family. Specifically expressed in the intestine.

This is Protein THEMIS3 (Themis3) from Mus musculus (Mouse).